Here is a 58-residue protein sequence, read N- to C-terminus: Metallothionein-1 (58 aa).

Residues 1–28 (PGPCCKDKCECAEGGCKTGCKCTSCRCA) are beta. 18 residues coordinate a divalent metal cation: cysteine 4, cysteine 5, cysteine 9, cysteine 11, cysteine 16, cysteine 20, cysteine 22, cysteine 25, cysteine 27, cysteine 30, cysteine 33, cysteine 37, cysteine 39, cysteine 45, cysteine 49, cysteine 53, cysteine 55, and cysteine 56. An alpha region spans residues 29 to 58 (PCEKCTSGCKCPSKDECAKTCSKPCSCCXX).

The protein belongs to the metallothionein superfamily. Type 3 family.

In terms of biological role, metallothioneins have a high content of cysteine residues that bind various heavy metals. The different forms of lobster metallothioneins may have different biological functions. Class I MTS in marine crustacea are involved in the sequestration of elevated levels of heavy-metal ions. Binds 6 metal ions. Known to bind cadmium. The chain is Metallothionein-1 from Homarus americanus (American lobster).